We begin with the raw amino-acid sequence, 206 residues long: Small ribosomal subunit protein uS4 (206 aa).

In terms of domain architecture, S4 RNA-binding spans 96 to 156 (GRLDNVVYRM…EKAKKQSRVK (61 aa)).

This sequence belongs to the universal ribosomal protein uS4 family. In terms of assembly, part of the 30S ribosomal subunit. Contacts protein S5. The interaction surface between S4 and S5 is involved in control of translational fidelity.

Its function is as follows. One of the primary rRNA binding proteins, it binds directly to 16S rRNA where it nucleates assembly of the body of the 30S subunit. In terms of biological role, with S5 and S12 plays an important role in translational accuracy. The polypeptide is Small ribosomal subunit protein uS4 (Serratia proteamaculans (strain 568)).